Here is a 216-residue protein sequence, read N- to C-terminus: Movement and silencing protein TGBp1 (216 aa).

The (+)RNA virus helicase ATP-binding domain maps to M1 to C110. The 106-residue stretch at S111–N216 folds into the (+)RNA virus helicase C-terminal domain.

This sequence belongs to the Tymovirales TGBp1 protein family. In terms of assembly, homodimer and homooligomer. Interacts with capsid protein. Interacts with host AGO1; this interaction targets the host protein for degradation, thereby suppressing the antiviral RNA silencing.

The protein resides in the host cytoplasm. In terms of biological role, transports viral genome to neighboring plant cells directly through plasmosdesmata, without any budding. The movement protein allows efficient cell to cell propagation, by bypassing the host cell wall barrier. Increases plasmodesma size exclusion limit. Acts as a suppressor of RNA-mediated gene silencing, also known as post-transcriptional gene silencing (PTGS), a mechanism of plant viral defense that limits the accumulation of viral RNAs. The protein is Movement and silencing protein TGBp1 of Lilium formosanum.